A 211-amino-acid chain; its full sequence is Large ribosomal subunit protein uL4 (211 aa).

Residues 41 to 53 (QAHSRQGTASTLT) are compositionally biased toward polar residues. The disordered stretch occupies residues 41-78 (QAHSRQGTASTLTRAEVRGGGRKPYKQKGTGRARQGTI). Over residues 60-71 (GGRKPYKQKGTG) the composition is skewed to basic residues.

The protein belongs to the universal ribosomal protein uL4 family. Part of the 50S ribosomal subunit.

Functionally, one of the primary rRNA binding proteins, this protein initially binds near the 5'-end of the 23S rRNA. It is important during the early stages of 50S assembly. It makes multiple contacts with different domains of the 23S rRNA in the assembled 50S subunit and ribosome. Its function is as follows. Forms part of the polypeptide exit tunnel. The polypeptide is Large ribosomal subunit protein uL4 (Prochlorococcus marinus (strain MIT 9303)).